Here is a 593-residue protein sequence, read N- to C-terminus: Aspartate--tRNA ligase (593 aa).

L-aspartate is bound at residue glutamate 180. Residues 204–207 (QIFK) are aspartate. L-aspartate is bound at residue arginine 226. Residues 226 to 228 (RDE) and glutamine 235 contribute to the ATP site. Histidine 453 provides a ligand contact to L-aspartate. An ATP-binding site is contributed by glutamate 487. Position 494 (arginine 494) interacts with L-aspartate. 539-542 (GLDR) is a binding site for ATP.

The protein belongs to the class-II aminoacyl-tRNA synthetase family. Type 1 subfamily. In terms of assembly, homodimer.

It localises to the cytoplasm. It catalyses the reaction tRNA(Asp) + L-aspartate + ATP = L-aspartyl-tRNA(Asp) + AMP + diphosphate. In terms of biological role, catalyzes the attachment of L-aspartate to tRNA(Asp) in a two-step reaction: L-aspartate is first activated by ATP to form Asp-AMP and then transferred to the acceptor end of tRNA(Asp). The chain is Aspartate--tRNA ligase from Clostridium botulinum (strain ATCC 19397 / Type A).